The sequence spans 520 residues: Ribonuclease Y (520 aa).

The chain crosses the membrane as a helical span at residues 3-23 (IELAIIFIVLAAGAGFLIGNL). The KH domain occupies 210–273 (TVSVVALPSD…EVAKIALEKL (64 aa)). The HD domain maps to 336–429 (VYQHSLEVAF…VQAADALSGA (94 aa)).

It belongs to the RNase Y family.

It localises to the cell membrane. Functionally, endoribonuclease that initiates mRNA decay. The protein is Ribonuclease Y of Geobacter sulfurreducens (strain ATCC 51573 / DSM 12127 / PCA).